A 336-amino-acid polypeptide reads, in one-letter code: Holliday junction branch migration complex subunit RuvB (336 aa).

Residues 1-182 are large ATPase domain (RuvB-L); the sequence is MKERIVNLET…FGMSFRMQFY (182 aa). Residues Leu-21, Arg-22, Gly-63, Lys-66, Thr-67, Ser-68, 129 to 131, Arg-172, Tyr-182, and Arg-219 contribute to the ATP site; that span reads EDF. Thr-67 is a Mg(2+) binding site. Residues 183–253 form a small ATPAse domain (RuvB-S) region; that stretch reads SPSELSLIIK…ITLHALNELG (71 aa). The segment at 256-336 is head domain (RuvB-H); the sequence is ELGFDEADLA…IPTLNPQTLF (81 aa). 2 residues coordinate DNA: Arg-310 and Arg-315.

The protein belongs to the RuvB family. As to quaternary structure, homohexamer. Forms an RuvA(8)-RuvB(12)-Holliday junction (HJ) complex. HJ DNA is sandwiched between 2 RuvA tetramers; dsDNA enters through RuvA and exits via RuvB. An RuvB hexamer assembles on each DNA strand where it exits the tetramer. Each RuvB hexamer is contacted by two RuvA subunits (via domain III) on 2 adjacent RuvB subunits; this complex drives branch migration. In the full resolvosome a probable DNA-RuvA(4)-RuvB(12)-RuvC(2) complex forms which resolves the HJ.

Its subcellular location is the cytoplasm. It carries out the reaction ATP + H2O = ADP + phosphate + H(+). The RuvA-RuvB-RuvC complex processes Holliday junction (HJ) DNA during genetic recombination and DNA repair, while the RuvA-RuvB complex plays an important role in the rescue of blocked DNA replication forks via replication fork reversal (RFR). RuvA specifically binds to HJ cruciform DNA, conferring on it an open structure. The RuvB hexamer acts as an ATP-dependent pump, pulling dsDNA into and through the RuvAB complex. RuvB forms 2 homohexamers on either side of HJ DNA bound by 1 or 2 RuvA tetramers; 4 subunits per hexamer contact DNA at a time. Coordinated motions by a converter formed by DNA-disengaged RuvB subunits stimulates ATP hydrolysis and nucleotide exchange. Immobilization of the converter enables RuvB to convert the ATP-contained energy into a lever motion, pulling 2 nucleotides of DNA out of the RuvA tetramer per ATP hydrolyzed, thus driving DNA branch migration. The RuvB motors rotate together with the DNA substrate, which together with the progressing nucleotide cycle form the mechanistic basis for DNA recombination by continuous HJ branch migration. Branch migration allows RuvC to scan DNA until it finds its consensus sequence, where it cleaves and resolves cruciform DNA. This chain is Holliday junction branch migration complex subunit RuvB, found in Helicobacter pylori (strain J99 / ATCC 700824) (Campylobacter pylori J99).